Here is a 216-residue protein sequence, read N- to C-terminus: Uracil phosphoribosyltransferase (216 aa).

5-phospho-alpha-D-ribose 1-diphosphate contacts are provided by residues Arg81, Arg106, and 135–143 (DPMLATGSS). Uracil is bound by residues Ile200 and 205-207 (GDA). Asp206 is a binding site for 5-phospho-alpha-D-ribose 1-diphosphate.

Belongs to the UPRTase family. The cofactor is Mg(2+).

It carries out the reaction UMP + diphosphate = 5-phospho-alpha-D-ribose 1-diphosphate + uracil. Its pathway is pyrimidine metabolism; UMP biosynthesis via salvage pathway; UMP from uracil: step 1/1. With respect to regulation, allosterically activated by GTP. Its function is as follows. Catalyzes the conversion of uracil and 5-phospho-alpha-D-ribose 1-diphosphate (PRPP) to UMP and diphosphate. The polypeptide is Uracil phosphoribosyltransferase (upp) (Porphyromonas gingivalis (strain ATCC 33277 / DSM 20709 / CIP 103683 / JCM 12257 / NCTC 11834 / 2561)).